The sequence spans 363 residues: MPVLLDPENALALDVLLAGIDAQGLDWHLSAPDAADLPRIRGIGTLSSAGNEEISFLSNPRYQNQLATTRAAAVIVTPDVAQARQEQGASGHVLVVCKHPYLLYARLAQWFERASRPAGPAGVHPSAVVDPSAEIDADVRVGAQCVIEAGARIGRGARLGPGCVIGAGSTVGADSLLHPRVTLYAGVHVGERAIIHSGAVLGADGFGFAPDPTLGRGAWGKIPQLGEVRVGNDVEIGANTTIDRGALDDTIVGDGVKLDNQIMVAHNVRIGAHTAIAACVGIAGSTTIGERCTIGGASMLSGHLAIADDVNISGGTAVTSNIAKAGRYTGVYPYAEHSEWQRNAAVIQQLALLRRRLRALERE.

The active-site Proton acceptor is the His-266.

It belongs to the transferase hexapeptide repeat family. LpxD subfamily. As to quaternary structure, homotrimer.

It catalyses the reaction a UDP-3-O-[(3R)-3-hydroxyacyl]-alpha-D-glucosamine + a (3R)-hydroxyacyl-[ACP] = a UDP-2-N,3-O-bis[(3R)-3-hydroxyacyl]-alpha-D-glucosamine + holo-[ACP] + H(+). Its pathway is bacterial outer membrane biogenesis; LPS lipid A biosynthesis. Catalyzes the N-acylation of UDP-3-O-acylglucosamine using 3-hydroxyacyl-ACP as the acyl donor. Is involved in the biosynthesis of lipid A, a phosphorylated glycolipid that anchors the lipopolysaccharide to the outer membrane of the cell. This Bordetella pertussis (strain Tohama I / ATCC BAA-589 / NCTC 13251) protein is UDP-3-O-acylglucosamine N-acyltransferase.